The chain runs to 369 residues: uncharacterized protein (369 aa).

The next 9 membrane-spanning stretches (helical) occupy residues 25–45 (QWVI…TVHW), 47–67 (FGLL…LMPE), 119–139 (LNIV…FGVM), 152–172 (ITGF…FSAL), 206–226 (GALH…LFAI), 235–255 (LQAV…TLHL), 268–288 (LLFT…LPLI), 295–315 (LVGF…TTVF), and 323–343 (WVFY…GTVF).

To B.subtilis ComEC.

It localises to the cell membrane. This is an uncharacterized protein from Mycoplasma pneumoniae (strain ATCC 29342 / M129 / Subtype 1) (Mycoplasmoides pneumoniae).